The chain runs to 478 residues: Maintenance of telomere capping protein 1 (478 aa).

The disordered stretch occupies residues 1 to 153; that stretch reads MSENKNSEAE…LHDPIASISN (153 aa). Basic and acidic residues-rich tracts occupy residues 77 to 87 and 95 to 124; these read TDKKGVEKKAP and AQDEKVEESKENKNSEQDAHGKEKEPQQQE. The span at 125–141 shows a compositional bias: acidic residues; the sequence is KEEEEEEEEEEEEEEEE. At Ser273 the chain carries Phosphoserine. 2 stretches are compositionally biased toward basic and acidic residues: residues 321–336 and 421–435; these read QKQQKEADATPDDDRS and SEERNKSYDQKKQKE. 2 disordered regions span residues 321-341 and 416-448; these read QKQQKEADATPDDDRSSISSN and TGSTASEERNKSYDQKKQKESEDEDEDDEIIDP. Ser436 bears the Phosphoserine mark. Residues 436 to 447 are compositionally biased toward acidic residues; the sequence is SEDEDEDDEIID.

It belongs to the MTC1 family. As to quaternary structure, interacts with ribosomes.

Its subcellular location is the cytoplasm. The protein resides in the cytoplasmic vesicle. The protein localises to the COPI-coated vesicle. Its function is as follows. Involved in telomere capping. In Saccharomyces cerevisiae (strain ATCC 204508 / S288c) (Baker's yeast), this protein is Maintenance of telomere capping protein 1 (MTC1).